Here is a 354-residue protein sequence, read N- to C-terminus: MASYTLAELAARVGGAVEGDGSLRLDGIAPLEEASASEISFFSNRKYRKAFEASRAGAVVVEPREQVPAGRTVLRVANAYLAFAKISTLFHPPREAVPEVAPTAVIHPTARVHPSAQVMPLACVGPDAQVGARSILFPGVHVADGARVGEDCVLYHNVVVRERCAVGNRVILQPGCVIGSDGFGFAFDPEGEGKGPRHYKVPQVGNVVVEDDVELGANTCVDRATLGTTRIGRGAKIDNLVQIAHNVQVGPLSLLVSQVGVAGSTKLGMGVVAGGQAGIVGHLEIGDGVRIGAQSGVMADVQAGETVSGSPAVPHGGWLKAMASLEHLHDMRKELRELRREVERLRADAGEDEP.

Catalysis depends on His245, which acts as the Proton acceptor.

It belongs to the transferase hexapeptide repeat family. LpxD subfamily. Homotrimer.

The catalysed reaction is a UDP-3-O-[(3R)-3-hydroxyacyl]-alpha-D-glucosamine + a (3R)-hydroxyacyl-[ACP] = a UDP-2-N,3-O-bis[(3R)-3-hydroxyacyl]-alpha-D-glucosamine + holo-[ACP] + H(+). It functions in the pathway bacterial outer membrane biogenesis; LPS lipid A biosynthesis. Functionally, catalyzes the N-acylation of UDP-3-O-acylglucosamine using 3-hydroxyacyl-ACP as the acyl donor. Is involved in the biosynthesis of lipid A, a phosphorylated glycolipid that anchors the lipopolysaccharide to the outer membrane of the cell. The protein is UDP-3-O-acylglucosamine N-acyltransferase of Anaeromyxobacter sp. (strain K).